Consider the following 75-residue polypeptide: uncharacterized protein (75 aa).

Residues 12–32 (LKVFILFTGFTALFYYAMIWV) form a helical membrane-spanning segment.

The protein resides in the cell membrane. This is an uncharacterized protein from Bacillus subtilis (strain 168).